Here is a 100-residue protein sequence, read N- to C-terminus: Small ribosomal subunit protein uS14c (100 aa).

It belongs to the universal ribosomal protein uS14 family. In terms of assembly, part of the 30S ribosomal subunit.

The protein resides in the plastid. Its subcellular location is the chloroplast. In terms of biological role, binds 16S rRNA, required for the assembly of 30S particles. In Stigeoclonium helveticum (Green alga), this protein is Small ribosomal subunit protein uS14c.